A 474-amino-acid polypeptide reads, in one-letter code: tRNA-2-methylthio-N(6)-dimethylallyladenosine synthase (474 aa).

The region spanning 3 to 120 is the MTTase N-terminal domain; that stretch reads KKLLIKTWGC…LPQMIKDSQS (118 aa). The [4Fe-4S] cluster site is built by cysteine 12, cysteine 49, cysteine 83, cysteine 157, cysteine 161, and cysteine 164. Residues 143 to 375 form the Radical SAM core domain; sequence RADGVTAFVS…QQQINTQAMR (233 aa). The TRAM domain maps to 378-441; sequence RQMLNTEQRI…TNSLRGELVR (64 aa).

The protein belongs to the methylthiotransferase family. MiaB subfamily. In terms of assembly, monomer. It depends on [4Fe-4S] cluster as a cofactor.

It localises to the cytoplasm. It carries out the reaction N(6)-dimethylallyladenosine(37) in tRNA + (sulfur carrier)-SH + AH2 + 2 S-adenosyl-L-methionine = 2-methylsulfanyl-N(6)-dimethylallyladenosine(37) in tRNA + (sulfur carrier)-H + 5'-deoxyadenosine + L-methionine + A + S-adenosyl-L-homocysteine + 2 H(+). Functionally, catalyzes the methylthiolation of N6-(dimethylallyl)adenosine (i(6)A), leading to the formation of 2-methylthio-N6-(dimethylallyl)adenosine (ms(2)i(6)A) at position 37 in tRNAs that read codons beginning with uridine. The chain is tRNA-2-methylthio-N(6)-dimethylallyladenosine synthase from Photobacterium profundum (strain SS9).